Consider the following 133-residue polypeptide: Nickel-responsive regulator (133 aa).

4 residues coordinate Ni(2+): H76, H87, H89, and C95.

Belongs to the transcriptional regulatory CopG/NikR family. As to quaternary structure, homotetramer. It depends on Ni(2+) as a cofactor.

Transcriptional repressor of the nikABCDE operon. Is active in the presence of excessive concentrations of intracellular nickel. This is Nickel-responsive regulator from Enterobacter sp. (strain 638).